A 160-amino-acid chain; its full sequence is 2-C-methyl-D-erythritol 2,4-cyclodiphosphate synthase (160 aa).

Asp-12 and His-14 together coordinate a divalent metal cation. 4-CDP-2-C-methyl-D-erythritol 2-phosphate-binding positions include 12 to 14 (DVH) and 38 to 39 (HS). His-46 serves as a coordination point for a divalent metal cation. Residues 60 to 62 (DIG), 65 to 69 (FPDTD), 136 to 139 (TTTE), Phe-143, and Arg-146 contribute to the 4-CDP-2-C-methyl-D-erythritol 2-phosphate site.

Belongs to the IspF family. In terms of assembly, homotrimer. The cofactor is a divalent metal cation.

It catalyses the reaction 4-CDP-2-C-methyl-D-erythritol 2-phosphate = 2-C-methyl-D-erythritol 2,4-cyclic diphosphate + CMP. It functions in the pathway isoprenoid biosynthesis; isopentenyl diphosphate biosynthesis via DXP pathway; isopentenyl diphosphate from 1-deoxy-D-xylulose 5-phosphate: step 4/6. Its function is as follows. Involved in the biosynthesis of isopentenyl diphosphate (IPP) and dimethylallyl diphosphate (DMAPP), two major building blocks of isoprenoid compounds. Catalyzes the conversion of 4-diphosphocytidyl-2-C-methyl-D-erythritol 2-phosphate (CDP-ME2P) to 2-C-methyl-D-erythritol 2,4-cyclodiphosphate (ME-CPP) with a corresponding release of cytidine 5-monophosphate (CMP). The sequence is that of 2-C-methyl-D-erythritol 2,4-cyclodiphosphate synthase from Acinetobacter baumannii (strain AB307-0294).